Reading from the N-terminus, the 262-residue chain is Carbohydrate deacetylase (262 aa).

Position 129 (His-129) interacts with Mg(2+).

Belongs to the YdjC deacetylase family. As to quaternary structure, homodimer. It depends on Mg(2+) as a cofactor.

In terms of biological role, probably catalyzes the deacetylation of acetylated carbohydrates an important step in the degradation of oligosaccharides. In Enterococcus faecalis (strain ATCC 700802 / V583), this protein is Carbohydrate deacetylase.